The following is a 218-amino-acid chain: Cytidylate kinase (218 aa).

10-18 (GPAAAGKST) lines the ATP pocket.

The protein belongs to the cytidylate kinase family. Type 1 subfamily.

Its subcellular location is the cytoplasm. It catalyses the reaction CMP + ATP = CDP + ADP. It carries out the reaction dCMP + ATP = dCDP + ADP. The polypeptide is Cytidylate kinase (Staphylococcus haemolyticus (strain JCSC1435)).